The chain runs to 401 residues: S-adenosylmethionine synthase (401 aa).

Position 136-141 (136-141 (GQGSVD)) interacts with ATP.

The protein belongs to the AdoMet synthase 2 family. The cofactor is Mg(2+).

It catalyses the reaction L-methionine + ATP + H2O = S-adenosyl-L-methionine + phosphate + diphosphate. The protein operates within amino-acid biosynthesis; S-adenosyl-L-methionine biosynthesis; S-adenosyl-L-methionine from L-methionine: step 1/1. Functionally, catalyzes the formation of S-adenosylmethionine from methionine and ATP. The polypeptide is S-adenosylmethionine synthase (mat) (Pyrococcus abyssi (strain GE5 / Orsay)).